The primary structure comprises 412 residues: CCA-adding enzyme (412 aa).

Ser41 and Lys44 together coordinate ATP. Residues Ser41 and Lys44 each coordinate CTP. Mg(2+) contacts are provided by Asp53, Asp55, and Asp106. Residues His129, Lys149, and Tyr158 each coordinate ATP. Positions 129, 149, and 158 each coordinate CTP.

The protein belongs to the tRNA nucleotidyltransferase/poly(A) polymerase family. Archaeal CCA-adding enzyme subfamily. Homodimer. Mg(2+) serves as cofactor.

The enzyme catalyses a tRNA precursor + 2 CTP + ATP = a tRNA with a 3' CCA end + 3 diphosphate. It carries out the reaction a tRNA with a 3' CCA end + 2 CTP + ATP = a tRNA with a 3' CCACCA end + 3 diphosphate. In terms of biological role, catalyzes the addition and repair of the essential 3'-terminal CCA sequence in tRNAs without using a nucleic acid template. Adds these three nucleotides in the order of C, C, and A to the tRNA nucleotide-73, using CTP and ATP as substrates and producing inorganic pyrophosphate. tRNA 3'-terminal CCA addition is required both for tRNA processing and repair. Also involved in tRNA surveillance by mediating tandem CCA addition to generate a CCACCA at the 3' terminus of unstable tRNAs. While stable tRNAs receive only 3'-terminal CCA, unstable tRNAs are marked with CCACCA and rapidly degraded. The sequence is that of CCA-adding enzyme from Saccharolobus solfataricus (strain ATCC 35092 / DSM 1617 / JCM 11322 / P2) (Sulfolobus solfataricus).